A 510-amino-acid polypeptide reads, in one-letter code: Histidine ammonia-lyase (510 aa).

Positions 143-145 (ASG) form a cross-link, 5-imidazolinone (Ala-Gly). Position 144 is a 2,3-didehydroalanine (Ser) (Ser-144).

This sequence belongs to the PAL/histidase family. Contains an active site 4-methylidene-imidazol-5-one (MIO), which is formed autocatalytically by cyclization and dehydration of residues Ala-Ser-Gly.

The protein localises to the cytoplasm. The catalysed reaction is L-histidine = trans-urocanate + NH4(+). It functions in the pathway amino-acid degradation; L-histidine degradation into L-glutamate; N-formimidoyl-L-glutamate from L-histidine: step 1/3. The chain is Histidine ammonia-lyase from Shewanella pealeana (strain ATCC 700345 / ANG-SQ1).